We begin with the raw amino-acid sequence, 276 residues long: Large ribosomal subunit protein uL2 (276 aa).

2 disordered regions span residues 1–20 (MGIK…TTND) and 219–276 (TVRG…RRKK). Residues 7–20 (NPTTNGRRNMTTND) are compositionally biased toward polar residues.

Belongs to the universal ribosomal protein uL2 family. Part of the 50S ribosomal subunit. Forms a bridge to the 30S subunit in the 70S ribosome.

One of the primary rRNA binding proteins. Required for association of the 30S and 50S subunits to form the 70S ribosome, for tRNA binding and peptide bond formation. It has been suggested to have peptidyltransferase activity; this is somewhat controversial. Makes several contacts with the 16S rRNA in the 70S ribosome. The polypeptide is Large ribosomal subunit protein uL2 (Bacillus mycoides (strain KBAB4) (Bacillus weihenstephanensis)).